A 376-amino-acid chain; its full sequence is ATP phosphoribosyltransferase regulatory subunit (376 aa).

Belongs to the class-II aminoacyl-tRNA synthetase family. HisZ subfamily. As to quaternary structure, heteromultimer composed of HisG and HisZ subunits.

It is found in the cytoplasm. It functions in the pathway amino-acid biosynthesis; L-histidine biosynthesis; L-histidine from 5-phospho-alpha-D-ribose 1-diphosphate: step 1/9. Its function is as follows. Required for the first step of histidine biosynthesis. May allow the feedback regulation of ATP phosphoribosyltransferase activity by histidine. The chain is ATP phosphoribosyltransferase regulatory subunit from Brucella canis (strain ATCC 23365 / NCTC 10854 / RM-666).